The sequence spans 435 residues: Pregnancy-specific beta-1-glycoprotein 6 (435 aa).

A signal peptide spans 1-34; the sequence is MGPLSAPPCTQHITWKGLLLTASLLNFWNLPTTA. The 109-residue stretch at 35 to 143 folds into the Ig-like V-type domain; sequence QVIIEAKPPK…TGYFTVTLYS (109 aa). 3 N-linked (GlcNAc...) asparagine glycosylation sites follow: asparagine 61, asparagine 103, and asparagine 110. Residues 126 to 128 carry the Cell attachment site motif; sequence RGD. Ig-like C2-type domains lie at 148–233, 241–326, and 334–405; these read PSIS…VTLN, PYIT…VTLN, and PRIY…KEIS. 3 disulfide bridges follow: cysteine 168–cysteine 216, cysteine 261–cysteine 309, and cysteine 353–cysteine 393. N-linked (GlcNAc...) asparagine glycans are attached at residues asparagine 198, asparagine 267, asparagine 302, and asparagine 386.

The protein belongs to the immunoglobulin superfamily. CEA family.

It is found in the secreted. This chain is Pregnancy-specific beta-1-glycoprotein 6 (PSG6), found in Homo sapiens (Human).